A 229-amino-acid chain; its full sequence is Flavin-dependent thymidylate synthase (229 aa).

The 217-residue stretch at 1-217 (MEFKVLDKGF…PWTFESFLKF (217 aa)) folds into the ThyX domain. Residues T55, 78–80 (RHR), and E86 each bind FAD. DUMP-binding positions include 75–78 (QWFR), 86–90 (EASLR), and R156. A ThyX motif motif is present at residues 78–88 (RHRIGSFNEAS). Residues 172-174 (NAR) and N178 each bind FAD. R183 is a dUMP binding site. Residue R183 is the Involved in ionization of N3 of dUMP, leading to its activation of the active site.

The protein belongs to the thymidylate synthase ThyX family. As to quaternary structure, homotetramer. FAD is required as a cofactor.

It catalyses the reaction dUMP + (6R)-5,10-methylene-5,6,7,8-tetrahydrofolate + NADPH + H(+) = dTMP + (6S)-5,6,7,8-tetrahydrofolate + NADP(+). Its pathway is pyrimidine metabolism; dTTP biosynthesis. In terms of biological role, catalyzes the reductive methylation of 2'-deoxyuridine-5'-monophosphate (dUMP) to 2'-deoxythymidine-5'-monophosphate (dTMP) while utilizing 5,10-methylenetetrahydrofolate (mTHF) as the methyl donor, and NADPH and FADH(2) as the reductant. This Thermosipho melanesiensis (strain DSM 12029 / CIP 104789 / BI429) protein is Flavin-dependent thymidylate synthase.